The sequence spans 896 residues: Lipoxygenase 2, chloroplastic (896 aa).

The N-terminal 56 residues, 1–56 (MYCRESLSSLQTLNVAKSLSSLFPKQSALINPISAGRRNNLPRPNLRRRCKVTASR), are a transit peptide targeting the chloroplast. The PLAT domain occupies 79-199 (ITAQEEFLEG…VDPTKRIFFS (121 aa)). Residues 175–232 (GSITFTCESWVAPKSVDPTKRIFFSDKSYLPSQTPEPLKKYRKEELETLQGKNREEVG) are EIF4E2 binding. One can recognise a Lipoxygenase domain in the interval 202–896 (SYLPSQTPEP…GMGVPYSISI (695 aa)). Residues His-554, His-559, His-746, Asn-750, and Ile-896 each coordinate Fe cation.

The protein belongs to the lipoxygenase family. As to quaternary structure, interacts with EIF4E2. Requires Fe cation as cofactor. As to expression, in leaves and inflorescences but not abundant in seeds, roots and stems.

It localises to the plastid. The protein resides in the chloroplast. Its subcellular location is the cytoplasm. It catalyses the reaction (9Z,12Z)-octadecadienoate + O2 = (13S)-hydroperoxy-(9Z,11E)-octadecadienoate. The enzyme catalyses (9Z,12Z,15Z)-octadecatrienoate + O2 = (13S)-hydroperoxy-(9Z,11E,15Z)-octadecatrienoate. The protein operates within lipid metabolism; oxylipin biosynthesis. 13S-lipoxygenase that can use linolenic acid as substrates. Plant lipoxygenases may be involved in a number of diverse aspects of plant physiology including growth and development, pest resistance, and senescence or responses to wounding. Catalyzes the hydroperoxidation of lipids containing a cis,cis-1,4-pentadiene structure. Required for the wound-induced synthesis of jasmonic acid (JA) in leaves. This is Lipoxygenase 2, chloroplastic (LOX2) from Arabidopsis thaliana (Mouse-ear cress).